The sequence spans 475 residues: Ribulose bisphosphate carboxylase large chain (475 aa).

A propeptide spanning residues 1–2 is cleaved from the precursor; that stretch reads MS. Pro-3 carries the N-acetylproline modification. Lys-14 is subject to N6,N6,N6-trimethyllysine. The active-site Proton acceptor is the Lys-175. Lys-175 and Lys-177 together coordinate D-ribulose 1,5-bisphosphate. Mg(2+) contacts are provided by Lys-201, Asp-203, and Glu-204. Position 201 is an N6-carboxylysine (Lys-201). Glu-204 provides a ligand contact to D-ribulose 1,5-bisphosphate. The active-site Proton acceptor is His-294. D-ribulose 1,5-bisphosphate-binding residues include Arg-295, His-327, Lys-334, Ser-379, Gly-381, Gly-403, and Gly-404.

It belongs to the RuBisCO large chain family. Type I subfamily. Heterohexadecamer of 8 large chains and 8 small chains. Heterohexadecamer; disulfide-linked. The disulfide link is formed within the large subunit homodimers. Requires Mg(2+) as cofactor. Post-translationally, the disulfide bond which can form in the large chain dimeric partners within the hexadecamer appears to be associated with oxidative stress and protein turnover.

The protein resides in the plastid. The protein localises to the chloroplast. It carries out the reaction 2 (2R)-3-phosphoglycerate + 2 H(+) = D-ribulose 1,5-bisphosphate + CO2 + H2O. The catalysed reaction is D-ribulose 1,5-bisphosphate + O2 = 2-phosphoglycolate + (2R)-3-phosphoglycerate + 2 H(+). In terms of biological role, ruBisCO catalyzes two reactions: the carboxylation of D-ribulose 1,5-bisphosphate, the primary event in carbon dioxide fixation, as well as the oxidative fragmentation of the pentose substrate in the photorespiration process. Both reactions occur simultaneously and in competition at the same active site. Binds to abscisic acid (ABA); only half of the possible binding sites are occupied in the crystal and there are indications this is a low affinity site. This chain is Ribulose bisphosphate carboxylase large chain, found in Pisum sativum (Garden pea).